A 283-amino-acid polypeptide reads, in one-letter code: 2,3,4,5-tetrahydropyridine-2,6-dicarboxylate N-succinyltransferase (283 aa).

Positions 107 and 144 each coordinate substrate.

This sequence belongs to the transferase hexapeptide repeat family. As to quaternary structure, homotrimer.

It localises to the cytoplasm. It catalyses the reaction (S)-2,3,4,5-tetrahydrodipicolinate + succinyl-CoA + H2O = (S)-2-succinylamino-6-oxoheptanedioate + CoA. It functions in the pathway amino-acid biosynthesis; L-lysine biosynthesis via DAP pathway; LL-2,6-diaminopimelate from (S)-tetrahydrodipicolinate (succinylase route): step 1/3. The sequence is that of 2,3,4,5-tetrahydropyridine-2,6-dicarboxylate N-succinyltransferase from Rhodospirillum rubrum (strain ATCC 11170 / ATH 1.1.1 / DSM 467 / LMG 4362 / NCIMB 8255 / S1).